Here is a 158-residue protein sequence, read N- to C-terminus: Cytochrome b562 (158 aa).

The next 4 helical transmembrane spans lie at 12–32 (ITLHWAIAGLVLFNYIFGETM), 46–66 (AGVGHYLHVVVGLAVLVLTLV), 87–107 (VAAGLQGLLYLLTLLVPALGM), and 121–141 (HVLAANAIMLLALVHAVSALF). Heme b is bound by residues H15 and H53. 2 residues coordinate heme b: H121 and H135.

Belongs to the cytochrome b561 family. As to quaternary structure, homodimer. Heme b serves as cofactor.

It localises to the cell membrane. Cytochrome b562 is an integral component of the cytochrome b-c1 complex in the cyclic electron transfer system of photosynthetic bacteria. The protein is Cytochrome b562 of Cereibacter sphaeroides (strain ATCC 17023 / DSM 158 / JCM 6121 / CCUG 31486 / LMG 2827 / NBRC 12203 / NCIMB 8253 / ATH 2.4.1.) (Rhodobacter sphaeroides).